We begin with the raw amino-acid sequence, 294 residues long: tRNA dimethylallyltransferase (294 aa).

11–18 (GPTAVGKT) is a binding site for ATP. 13-18 (TAVGKT) contributes to the substrate binding site. The segment at 36–39 (DSQQ) is interaction with substrate tRNA.

Belongs to the IPP transferase family. Monomer. Mg(2+) serves as cofactor.

It catalyses the reaction adenosine(37) in tRNA + dimethylallyl diphosphate = N(6)-dimethylallyladenosine(37) in tRNA + diphosphate. Catalyzes the transfer of a dimethylallyl group onto the adenine at position 37 in tRNAs that read codons beginning with uridine, leading to the formation of N6-(dimethylallyl)adenosine (i(6)A). In Lactococcus lactis subsp. cremoris (strain MG1363), this protein is tRNA dimethylallyltransferase.